Here is a 383-residue protein sequence, read N- to C-terminus: MGCAGSTLRSGASFEDSRLAAIEDSRFHEVGHHAQFEDSRLAAIEDSRFHEVGHHAQFDEGGRFKQLPPANDDAKLLVADHPSLGVIRLDYDYPPALGDVDHPGSFYYDVFYRVVPGLTFELCQSGELPDDVKQRFIDAITWLDEQGVAGITGDCGFFMYFQALARSVTSKPVFMSSLCQLPAVVCAYAADEHIALFTANGESLKPMRELIKKECGVDPDDTRFVIVGCEDVPGFEAVANGDRVDVDSVLPHLVRLAEDTVAKHAGTAKPIRAILFECTELPPYSDAVRAATRLPVFDSITCCNSMLASLMDNPRFGVNNWHLSWDGAHTAHRFGDNVPPHLKGKLVNREHPENVARWNASLAERSSFSSAQQESIGRGSREL.

This sequence belongs to the aspartate/glutamate racemases family. ALMA1 subfamily. Homotetramer.

It catalyses the reaction S,S-dimethyl-beta-propiothetin = acrylate + dimethyl sulfide + H(+). Functionally, mediates cleavage of dimethylsulfoniopropionate (DMSP) into dimethyl sulfide (DMS) and acrylate. DMS is the principal form by which sulfur is transported from oceans to the atmosphere and is a key component of the ocean sulfur cycle. This is Dimethylsulfoniopropionate lyase 6 from Emiliania huxleyi (strain CCMP1516).